Here is a 156-residue protein sequence, read N- to C-terminus: Arginine repressor (156 aa).

This sequence belongs to the ArgR family.

It localises to the cytoplasm. It participates in amino-acid biosynthesis; L-arginine biosynthesis [regulation]. Regulates arginine biosynthesis genes. The protein is Arginine repressor of Shewanella sediminis (strain HAW-EB3).